The following is a 543-amino-acid chain: MSTFQLSASSKDSYLFRTEEELEEEVYGKTGFFKHIRVARNEWPRVLYLSLLFGVITMVHTIMGNLREMVLMGRQDPMSMFFIKSIFLPPCSLLFIWAIQLGLSLFTPSKMFDITLILFSGCYILFGLVVWPLKGYIQKDFYWSRDIFGDGKMESLRIHFLYPVFLVFNEWTSSFLFLCSEMWGALVVSYFFNIFANEVSTRRQSQRYISVYNISNAISIFLSAVLTLVFNKWRDGVAFETKELGFRILILVLGSTVIGILALKKYMEREILPAPVFLIREVEKTSTERRKLKLDEARQTLSRSKLLIAISLNVLLYGVTSTLVEATFKSGIAAGARYTNNSKETFANFYNGLEQIIIAISLLVVINTPYSALVKKGGWKYLASLPIVIAMFSLFSVFLIAFYNVGADSGGNVLFGSLFKNRMPTFILENTLGLVTNASMKIGKYLGADVSKEAISMQIDPLYRAKYKAVYDGLCGKLGKSLGSIICTVMTGLWDITDIRRVSSVSGILIVIIIAMWYFILKYLSRQFQAAVEANTYIELDEF.

10 helical membrane-spanning segments follow: residues 46-66 (VLYL…MGNL), 86-106 (IFLP…LSLF), 111-131 (MFDI…LVVW), 175-195 (FLFL…FNIF), 209-229 (ISVY…LTLV), 243-263 (ELGF…ILAL), 306-326 (LLIA…LVEA), 346-366 (FANF…LVVI), 382-402 (LASL…LIAF), and 504-524 (SVSG…LKYL).

Belongs to the ADP/ATP translocase tlc family.

The protein resides in the mitosome membrane. ATP transporter involved in the uptake of ATP from the parasite cell cytoplasm into the mitosome matrix. Equilibrates nucleotide pools across a concentration gradient between both sides of the mitosome membrane. This Encephalitozoon cuniculi (strain GB-M1) (Microsporidian parasite) protein is ADP,ATP carrier protein 3 (NTT3).